A 473-amino-acid chain; its full sequence is MKTLYSPRRYYPVETLFNGTLSVGGRDQETTGFAWWAGNARLINLSGKLLGAHVAHAGLIVFWAGAMNLFEVAHFVPEKPMYEQGLILLPHLASLGWGVGPGGEVIDTFPYFVSGVLHVISSAVLGFGGVYHAIIGPETLEESFPFFGYVWKDKNKMTTILGIHLVLLGFGALLLVAKAVWFGGVYDTWAPGGGDVRVITNPTYDPSIIFGYLLKSPFGGEGWITSVDNMEDIIGGHIWIGFICIFGGIWHIVTKPFAWARRAFVWSGEAYLSYSLGAISAMGFIACCFVWFNNTAYPSEFYGPTGPEASQAQAFTFLVRDQRLGANIGSAQGPTGLGKYLMRSPTGEIIFGGETMRFWDLRAPWLEPLRGPNGLDLSKLKKDIQPWQERRSAEYMTHAPLGSLNSVGGVATEINAVNYVSPRSWLSTSHFVLGFFFFVAHLWHAGRARAAAAGFEKGIERETEPVLFMSPLD.

Residues 1-14 (MKTLYSPRRYYPVE) constitute a propeptide that is removed on maturation. An N-acetylthreonine modification is found at Thr-15. A Phosphothreonine modification is found at Thr-15. Transmembrane regions (helical) follow at residues 69-93 (LFEVAHFVPEKPMYEQGLILLPHLA), 134-155 (IIGPETLEESFPFFGYVWKDKN), 178-200 (KAVWFGGVYDTWAPGGGDVRVIT), 255-275 (KPFAWARRAFVWSGEAYLSYS), and 291-312 (WFNNTAYPSEFYGPTGPEASQA). Glu-367 provides a ligand contact to [CaMn4O5] cluster. A helical membrane pass occupies residues 447–471 (RARAAAAGFEKGIERETEPVLFMSP).

The protein belongs to the PsbB/PsbC family. PsbC subfamily. PSII is composed of 1 copy each of membrane proteins PsbA, PsbB, PsbC, PsbD, PsbE, PsbF, PsbH, PsbI, PsbJ, PsbK, PsbL, PsbM, PsbT, PsbX, PsbY, PsbZ, Psb30/Ycf12, at least 3 peripheral proteins of the oxygen-evolving complex and a large number of cofactors. It forms dimeric complexes. Requires Binds multiple chlorophylls and provides some of the ligands for the Ca-4Mn-5O cluster of the oxygen-evolving complex. It may also provide a ligand for a Cl- that is required for oxygen evolution. PSII binds additional chlorophylls, carotenoids and specific lipids. as cofactor.

It is found in the plastid. It localises to the chloroplast thylakoid membrane. Its function is as follows. One of the components of the core complex of photosystem II (PSII). It binds chlorophyll and helps catalyze the primary light-induced photochemical processes of PSII. PSII is a light-driven water:plastoquinone oxidoreductase, using light energy to abstract electrons from H(2)O, generating O(2) and a proton gradient subsequently used for ATP formation. The chain is Photosystem II CP43 reaction center protein from Chaetosphaeridium globosum (Charophycean green alga).